The primary structure comprises 366 residues: Glutamate 5-kinase (366 aa).

Lysine 17 is an ATP binding site. 3 residues coordinate substrate: serine 57, aspartate 144, and asparagine 156. Residues serine 176–aspartate 177 and threonine 216–lysine 222 contribute to the ATP site. Residues serine 278–proline 356 form the PUA domain.

This sequence belongs to the glutamate 5-kinase family.

It localises to the cytoplasm. The catalysed reaction is L-glutamate + ATP = L-glutamyl 5-phosphate + ADP. The protein operates within amino-acid biosynthesis; L-proline biosynthesis; L-glutamate 5-semialdehyde from L-glutamate: step 1/2. Functionally, catalyzes the transfer of a phosphate group to glutamate to form L-glutamate 5-phosphate. The chain is Glutamate 5-kinase from Mycolicibacterium vanbaalenii (strain DSM 7251 / JCM 13017 / BCRC 16820 / KCTC 9966 / NRRL B-24157 / PYR-1) (Mycobacterium vanbaalenii).